A 347-amino-acid chain; its full sequence is Phosphoribosylformylglycinamidine cyclo-ligase (347 aa).

It belongs to the AIR synthase family.

Its subcellular location is the cytoplasm. The enzyme catalyses 2-formamido-N(1)-(5-O-phospho-beta-D-ribosyl)acetamidine + ATP = 5-amino-1-(5-phospho-beta-D-ribosyl)imidazole + ADP + phosphate + H(+). Its pathway is purine metabolism; IMP biosynthesis via de novo pathway; 5-amino-1-(5-phospho-D-ribosyl)imidazole from N(2)-formyl-N(1)-(5-phospho-D-ribosyl)glycinamide: step 2/2. The sequence is that of Phosphoribosylformylglycinamidine cyclo-ligase from Prochlorococcus marinus subsp. pastoris (strain CCMP1986 / NIES-2087 / MED4).